Reading from the N-terminus, the 244-residue chain is Acetylglutamate kinase (244 aa).

Residues 40 to 41, Arg62, and Asn155 each bind substrate; that span reads GG.

It belongs to the acetylglutamate kinase family. ArgB subfamily.

It localises to the cytoplasm. The enzyme catalyses N-acetyl-L-glutamate + ATP = N-acetyl-L-glutamyl 5-phosphate + ADP. It functions in the pathway amino-acid biosynthesis; L-arginine biosynthesis; N(2)-acetyl-L-ornithine from L-glutamate: step 2/4. Its function is as follows. Catalyzes the ATP-dependent phosphorylation of N-acetyl-L-glutamate. This chain is Acetylglutamate kinase, found in Leuconostoc mesenteroides subsp. mesenteroides (strain ATCC 8293 / DSM 20343 / BCRC 11652 / CCM 1803 / JCM 6124 / NCDO 523 / NBRC 100496 / NCIMB 8023 / NCTC 12954 / NRRL B-1118 / 37Y).